Consider the following 176-residue polypeptide: Methylated-DNA--protein-cysteine methyltransferase (176 aa).

Residue cysteine 142 is the Nucleophile; methyl group acceptor of the active site.

The protein belongs to the MGMT family.

The protein resides in the cytoplasm. It carries out the reaction a 6-O-methyl-2'-deoxyguanosine in DNA + L-cysteinyl-[protein] = S-methyl-L-cysteinyl-[protein] + a 2'-deoxyguanosine in DNA. It catalyses the reaction a 4-O-methyl-thymidine in DNA + L-cysteinyl-[protein] = a thymidine in DNA + S-methyl-L-cysteinyl-[protein]. Its function is as follows. Involved in the cellular defense against the biological effects of O6-methylguanine (O6-MeG) and O4-methylthymine (O4-MeT) in DNA. Repairs the methylated nucleobase in DNA by stoichiometrically transferring the methyl group to a cysteine residue in the enzyme. This is a suicide reaction: the enzyme is irreversibly inactivated. The sequence is that of Methylated-DNA--protein-cysteine methyltransferase from Methanothermobacter thermautotrophicus (strain ATCC 29096 / DSM 1053 / JCM 10044 / NBRC 100330 / Delta H) (Methanobacterium thermoautotrophicum).